The chain runs to 466 residues: Histidine--tRNA ligase (466 aa).

This sequence belongs to the class-II aminoacyl-tRNA synthetase family. In terms of assembly, homodimer.

The protein resides in the cytoplasm. The catalysed reaction is tRNA(His) + L-histidine + ATP = L-histidyl-tRNA(His) + AMP + diphosphate + H(+). The sequence is that of Histidine--tRNA ligase (hisS) from Xylella fastidiosa (strain 9a5c).